We begin with the raw amino-acid sequence, 309 residues long: Probable manganese-dependent inorganic pyrophosphatase (309 aa).

The Mn(2+) site is built by His-9, Asp-13, Asp-15, Asp-75, His-97, and Asp-149.

This sequence belongs to the PPase class C family. It depends on Mn(2+) as a cofactor.

It is found in the cytoplasm. The enzyme catalyses diphosphate + H2O = 2 phosphate + H(+). This is Probable manganese-dependent inorganic pyrophosphatase from Bacillus cereus (strain B4264).